The chain runs to 398 residues: 2-amino-3-ketobutyrate coenzyme A ligase (398 aa).

111–112 (CF) contributes to the pyridoxal 5'-phosphate binding site. H136 lines the substrate pocket. Residues S185, 210 to 213 (DDSH), 241 to 244 (TLGK), and 274 to 275 (SN) each bind pyridoxal 5'-phosphate. Residue K244 is modified to N6-(pyridoxal phosphate)lysine. R368 is a binding site for substrate.

Belongs to the class-II pyridoxal-phosphate-dependent aminotransferase family. Homodimer. It depends on pyridoxal 5'-phosphate as a cofactor.

It carries out the reaction glycine + acetyl-CoA = (2S)-2-amino-3-oxobutanoate + CoA. Its pathway is amino-acid degradation; L-threonine degradation via oxydo-reductase pathway; glycine from L-threonine: step 2/2. Its function is as follows. Catalyzes the cleavage of 2-amino-3-ketobutyrate to glycine and acetyl-CoA. In Escherichia coli (strain K12), this protein is 2-amino-3-ketobutyrate coenzyme A ligase.